The sequence spans 623 residues: Cell pattern formation-associated protein stuA (623 aa).

The segment covering 13–31 (QHMQSAGQPQQPQTVTSGP) has biased composition (polar residues). Residues 13–111 (QHMQSAGQPQ…DTTGQHPPPG (99 aa)) form a disordered region. Residues 115–221 (RVTATLWEDE…HNIGALLYHP (107 aa)) form the HTH APSES-type domain. A DNA-binding region (H-T-H motif) is located at residues 149 to 170 (GTKLLNVAGMTRGRRDGILKSE). 2 disordered regions span residues 232–270 (AAAE…PQSS) and 332–623 (ARSM…PRQR). Residues 335-374 (MPTTPATTPPGSMQPYGSAQSFDGSRQQMYNAPSQQSPYP) are compositionally biased toward polar residues. Over residues 396 to 408 (GPPSSRPSGSAPS) the composition is skewed to low complexity. Residues 423 to 446 (EHGHQSHAGEEDGEHEQHDAEYTH) show a composition bias toward basic and acidic residues. Over residues 542-553 (APPADMANPMPN) the composition is skewed to low complexity. Residues 569 to 594 (KRGREGDDDLSRPVGDVPGMDMKRRK) are nuclear localization domain. Residues 570–579 (RGREGDDDLS) are compositionally biased toward basic and acidic residues.

Belongs to the EFG1/PHD1/stuA family.

The protein localises to the nucleus. Its function is as follows. Transcription factor that regulates asexual reproduction. Binds the StuA-response elements (StRE) with the consensus sequence 5'-(A/T)CGCG(T/A)N(A/C)-3' at the promoters of target genes. Controls conidiation by positively regulating the expression of brlA and abaA. Positively regulates the cephalosporin biosynthesis gene cluster. Also involved hyphal fragmentation and cell wall integrity. The protein is Cell pattern formation-associated protein stuA of Hapsidospora chrysogenum (strain ATCC 11550 / CBS 779.69 / DSM 880 / IAM 14645 / JCM 23072 / IMI 49137) (Acremonium chrysogenum).